The following is a 352-amino-acid chain: Poly(A)+ RNA export protein (352 aa).

5 WD repeats span residues 28 to 58, 72 to 102, 113 to 146, 192 to 229, and 252 to 282; these read PPED…RIYE, EHQG…KVFD, AHDD…KYWD, IFKL…AIQN, and ADVY…SFWD.

The protein belongs to the WD repeat rae1 family. As to quaternary structure, interacts with rpn15/dss1 and uap56.

The protein localises to the nucleus. Functionally, required for mitotic cell growth as well as for spore germination. Functions in cell cycle progression through trafficking of proteins required for mitosis. Has a role in the mRNA export process. This is Poly(A)+ RNA export protein (rae1) from Schizosaccharomyces pombe (strain 972 / ATCC 24843) (Fission yeast).